A 547-amino-acid polypeptide reads, in one-letter code: Threonine synthase (547 aa).

An N6-(pyridoxal phosphate)lysine modification is found at K117. Pyridoxal 5'-phosphate contacts are provided by G272, N273, F274, D276, and T471.

The protein belongs to the threonine synthase family. It depends on pyridoxal 5'-phosphate as a cofactor.

It carries out the reaction O-phospho-L-homoserine + H2O = L-threonine + phosphate. It functions in the pathway amino-acid biosynthesis; L-threonine biosynthesis; L-threonine from L-aspartate: step 5/5. Its function is as follows. Catalyzes the gamma-elimination of phosphate from L-phosphohomoserine and the beta-addition of water to produce L-threonine. This is Threonine synthase from Cryptococcus neoformans var. grubii serotype A (strain H99 / ATCC 208821 / CBS 10515 / FGSC 9487) (Filobasidiella neoformans var. grubii).